The primary structure comprises 271 residues: Dermonecrotic toxin LhSicTox-alphaIA2aiv (271 aa).

His3 is an active-site residue. Mg(2+)-binding residues include Glu23 and Asp25. His39 functions as the Nucleophile in the catalytic mechanism. Intrachain disulfides connect Cys43–Cys49 and Cys45–Cys188. Asp83 contributes to the Mg(2+) binding site.

This sequence belongs to the arthropod phospholipase D family. Class II subfamily. Mg(2+) is required as a cofactor. Expressed by the venom gland.

The protein localises to the secreted. The enzyme catalyses an N-(acyl)-sphingosylphosphocholine = an N-(acyl)-sphingosyl-1,3-cyclic phosphate + choline. It catalyses the reaction an N-(acyl)-sphingosylphosphoethanolamine = an N-(acyl)-sphingosyl-1,3-cyclic phosphate + ethanolamine. It carries out the reaction a 1-acyl-sn-glycero-3-phosphocholine = a 1-acyl-sn-glycero-2,3-cyclic phosphate + choline. The catalysed reaction is a 1-acyl-sn-glycero-3-phosphoethanolamine = a 1-acyl-sn-glycero-2,3-cyclic phosphate + ethanolamine. In terms of biological role, dermonecrotic toxins cleave the phosphodiester linkage between the phosphate and headgroup of certain phospholipids (sphingolipid and lysolipid substrates), forming an alcohol (often choline) and a cyclic phosphate. This toxin acts on sphingomyelin (SM). It may also act on ceramide phosphoethanolamine (CPE), lysophosphatidylcholine (LPC) and lysophosphatidylethanolamine (LPE), but not on lysophosphatidylserine (LPS), and lysophosphatidylglycerol (LPG). It acts by transphosphatidylation, releasing exclusively cyclic phosphate products as second products. Induces dermonecrosis, hemolysis, increased vascular permeability, edema, inflammatory response, and platelet aggregation. The sequence is that of Dermonecrotic toxin LhSicTox-alphaIA2aiv from Loxosceles hirsuta (Recluse spider).